We begin with the raw amino-acid sequence, 198 residues long: TM2 domain-containing protein 2 (198 aa).

An N-terminal signal peptide occupies residues 1-27 (MRWPVPPVGYLLLGGQGLLLTFSLISS). The Extracellular segment spans residues 28–128 (QNQTSPVTYP…FLRGNKPCIK (101 aa)). Residues Asn29, Asn40, and Asn76 are each glycosylated (N-linked (GlcNAc...) asparagine). The helical transmembrane segment at 129 to 149 (YTGHYFITTLLYSFFLGCFGV) threads the bilayer. Residues 131–179 (GHYFITTLLYSFFLGCFGVDRFCLGHTGTAVGKLLTLGGLGIWWFVDLI) form the TM2 domain. The Cytoplasmic segment spans residues 150–166 (DRFCLGHTGTAVGKLLT). A helical membrane pass occupies residues 167-187 (LGGLGIWWFVDLILLITGGLM). Topologically, residues 188-198 (PSDNSNWCTIY) are extracellular.

It belongs to the TM2 family.

The protein localises to the membrane. The chain is TM2 domain-containing protein 2 (tm2d2) from Xenopus tropicalis (Western clawed frog).